We begin with the raw amino-acid sequence, 280 residues long: 4-diphosphocytidyl-2-C-methyl-D-erythritol kinase (280 aa).

Residue Lys-8 is part of the active site. 91 to 101 (PVSAGLAGGSS) contacts ATP. The active site involves Asp-133.

The protein belongs to the GHMP kinase family. IspE subfamily.

It catalyses the reaction 4-CDP-2-C-methyl-D-erythritol + ATP = 4-CDP-2-C-methyl-D-erythritol 2-phosphate + ADP + H(+). It functions in the pathway isoprenoid biosynthesis; isopentenyl diphosphate biosynthesis via DXP pathway; isopentenyl diphosphate from 1-deoxy-D-xylulose 5-phosphate: step 3/6. Catalyzes the phosphorylation of the position 2 hydroxy group of 4-diphosphocytidyl-2C-methyl-D-erythritol. The sequence is that of 4-diphosphocytidyl-2-C-methyl-D-erythritol kinase from Clostridium novyi (strain NT).